Here is a 307-residue protein sequence, read N- to C-terminus: MTNKAHSQGSKKTIQGSMPAIVTPMFEDGSLDYPGLRALLDWHVSEGSDGIVIVGTSGESPTVSVEEHCELIRVTVEQIAGRIPVIAGTGGNSTQEAIELTHFAKKVGADASLQVVPYYNKPTQEGMYAHFKKIAESVDLPVILYNVPGRTVADMAGDTVVRLAGVPGIIGIKDATGSLERGTLLINDLKRAGHHEFSVFSGDDLTAAMLMLMGGHGNISVTANVAPRLMHELCVAAMSDDVKRTREIQYQLIAVHKAMFIEANPIPVKWALHEMGKITAGIRLPLTPLSSSLREPLKAALKQANLL.

Residue Ser-57 participates in pyruvate binding. The Proton donor/acceptor role is filled by Tyr-145. Lys-173 (schiff-base intermediate with substrate) is an active-site residue. Ile-219 contacts pyruvate.

This sequence belongs to the DapA family. As to quaternary structure, homotetramer; dimer of dimers.

The protein localises to the cytoplasm. It carries out the reaction L-aspartate 4-semialdehyde + pyruvate = (2S,4S)-4-hydroxy-2,3,4,5-tetrahydrodipicolinate + H2O + H(+). Its pathway is amino-acid biosynthesis; L-lysine biosynthesis via DAP pathway; (S)-tetrahydrodipicolinate from L-aspartate: step 3/4. Functionally, catalyzes the condensation of (S)-aspartate-beta-semialdehyde [(S)-ASA] and pyruvate to 4-hydroxy-tetrahydrodipicolinate (HTPA). This Polynucleobacter asymbioticus (strain DSM 18221 / CIP 109841 / QLW-P1DMWA-1) (Polynucleobacter necessarius subsp. asymbioticus) protein is 4-hydroxy-tetrahydrodipicolinate synthase.